Consider the following 101-residue polypeptide: Large ribosomal subunit protein eL43 (101 aa).

The segment at 40 to 62 (CPSCRSLVRLKRLAFGIWQCPKC) adopts a C4-type zinc-finger fold.

The protein belongs to the eukaryotic ribosomal protein eL43 family. It depends on Zn(2+) as a cofactor.

The protein is Large ribosomal subunit protein eL43 of Pyrobaculum islandicum (strain DSM 4184 / JCM 9189 / GEO3).